Consider the following 215-residue polypeptide: Nucleoside triphosphate pyrophosphatase (215 aa).

Residue Asp77 is the Proton acceptor of the active site.

Belongs to the Maf family. Requires a divalent metal cation as cofactor.

The protein localises to the cytoplasm. It catalyses the reaction a ribonucleoside 5'-triphosphate + H2O = a ribonucleoside 5'-phosphate + diphosphate + H(+). The enzyme catalyses a 2'-deoxyribonucleoside 5'-triphosphate + H2O = a 2'-deoxyribonucleoside 5'-phosphate + diphosphate + H(+). Functionally, nucleoside triphosphate pyrophosphatase. May have a dual role in cell division arrest and in preventing the incorporation of modified nucleotides into cellular nucleic acids. This is Nucleoside triphosphate pyrophosphatase from Rickettsia africae (strain ESF-5).